The primary structure comprises 104 residues: Large ribosomal subunit protein bL21c (104 aa).

This sequence belongs to the bacterial ribosomal protein bL21 family. Part of the 50S ribosomal subunit.

It is found in the plastid. The protein localises to the chloroplast. This protein binds to 23S rRNA. This is Large ribosomal subunit protein bL21c from Pyropia yezoensis (Susabi-nori).